We begin with the raw amino-acid sequence, 390 residues long: Lipid-A-disaccharide synthase (390 aa).

Belongs to the LpxB family.

The enzyme catalyses a lipid X + a UDP-2-N,3-O-bis[(3R)-3-hydroxyacyl]-alpha-D-glucosamine = a lipid A disaccharide + UDP + H(+). It participates in bacterial outer membrane biogenesis; LPS lipid A biosynthesis. Functionally, condensation of UDP-2,3-diacylglucosamine and 2,3-diacylglucosamine-1-phosphate to form lipid A disaccharide, a precursor of lipid A, a phosphorylated glycolipid that anchors the lipopolysaccharide to the outer membrane of the cell. The protein is Lipid-A-disaccharide synthase of Rickettsia felis (strain ATCC VR-1525 / URRWXCal2) (Rickettsia azadi).